The chain runs to 90 residues: Acylphosphatase (90 aa).

Positions 3 to 90 (QRQFTVYGCV…RVFSDFTIER (88 aa)) constitute an Acylphosphatase-like domain. Active-site residues include Arg18 and Asn36.

The protein belongs to the acylphosphatase family.

The catalysed reaction is an acyl phosphate + H2O = a carboxylate + phosphate + H(+). This is Acylphosphatase (acyP) from Actinobacillus succinogenes (strain ATCC 55618 / DSM 22257 / CCUG 43843 / 130Z).